The primary structure comprises 245 residues: Zinc finger protein 575 (245 aa).

The tract at residues 1-67 (MLERGAESAA…PPQRPHRCPD (67 aa)) is disordered. A compositionally biased stretch (low complexity) spans 36–49 (PSQSAPGPTASAGS). Residues 52–63 (RPRRRPPPQRPH) are compositionally biased toward basic residues. C2H2-type zinc fingers lie at residues 63–85 (HRCPDCDKAFSYPSKLATHRLAH), 91–113 (HPCPDCPKAFSYPSKLAAHRLTH), 119–141 (HPCPHCPKSFGHRSKLAAHLWTH), 147–169 (YPCPDCPKSFCYPSKLAAHRHTH), 177–199 (YPCPHCPKAFSFPSKLAAHRLCH), and 213–240 (HRCSSCGQAFGQRRLLLLHQRSHHQVEH).

The protein belongs to the krueppel C2H2-type zinc-finger protein family.

The protein localises to the nucleus. In terms of biological role, may be involved in transcriptional regulation. This is Zinc finger protein 575 (ZNF575) from Homo sapiens (Human).